The sequence spans 92 residues: uncharacterized protein (92 aa).

Residues 25 to 53 (AGRGVRREARDTPCRGTAEGLATSQPEDG) form a disordered region.

This is an uncharacterized protein from Treponema pallidum (strain Nichols).